The following is a 314-amino-acid chain: ATP synthase gamma chain (314 aa).

It belongs to the ATPase gamma chain family. As to quaternary structure, F-type ATPases have 2 components, CF(1) - the catalytic core - and CF(0) - the membrane proton channel. CF(1) has five subunits: alpha(3), beta(3), gamma(1), delta(1), epsilon(1). CF(0) has three main subunits: a, b and c.

It localises to the cellular thylakoid membrane. Its function is as follows. Produces ATP from ADP in the presence of a proton gradient across the membrane. The gamma chain is believed to be important in regulating ATPase activity and the flow of protons through the CF(0) complex. The sequence is that of ATP synthase gamma chain from Rippkaea orientalis (strain PCC 8801 / RF-1) (Cyanothece sp. (strain PCC 8801)).